Reading from the N-terminus, the 858-residue chain is DNA mismatch repair protein MutS (858 aa).

Residue 600–607 participates in ATP binding; sequence GPNMSGKS.

It belongs to the DNA mismatch repair MutS family.

Functionally, this protein is involved in the repair of mismatches in DNA. It is possible that it carries out the mismatch recognition step. This protein has a weak ATPase activity. The chain is DNA mismatch repair protein MutS from Bacillus pumilus (strain SAFR-032).